The chain runs to 608 residues: Mitogen-activated protein kinase kinase kinase 1 (608 aa).

Residues 1–13 (MDRILARMKKSTG) show a composition bias toward basic residues. The tract at residues 1–20 (MDRILARMKKSTGRRGGDKN) is disordered. The regulatory region stretch occupies residues 1–325 (MDRILARMKK…VSNTSPIYPD (325 aa)). Serine 62 is modified (phosphoserine). The interval 192-234 (MERTPTIVKSKGYLVPNNVVAVGVGVGGGIKGLRPPVLKPPPA) is binding with MPK4. 2 disordered regions span residues 228–247 (VLKP…GSSW) and 256–287 (SETV…EAEE). Acidic residues predominate over residues 271–287 (DGCDEEEGKEEEAEAEE). Residues 333–587 (WQKGQLLGRG…AAELLNHPFV (255 aa)) enclose the Protein kinase domain. ATP is bound by residues 339-347 (LGRGSFGSV) and lysine 361. Aspartate 456 serves as the catalytic Proton acceptor. Serine 603 carries the post-translational modification Phosphoserine.

The protein belongs to the protein kinase superfamily. STE Ser/Thr protein kinase family. MAP kinase kinase kinase subfamily. In terms of assembly, interacts with MKK1, MMK2 and MPK4. May form a ternary complex composed of MEKK1 and MKK1/MKK2 and MPK4. Interacts with RACK1A, RACK1B and RACK1C. Binds to CRLK1. In terms of processing, phosphorylated by CRLK1 in response to cold.

Its subcellular location is the cell membrane. It is found in the endosome. The enzyme catalyses L-seryl-[protein] + ATP = O-phospho-L-seryl-[protein] + ADP + H(+). It carries out the reaction L-threonyl-[protein] + ATP = O-phospho-L-threonyl-[protein] + ADP + H(+). Activated by cold via CRLK1-mediated phosphorylation and leading to elevated kinase activity towards MKK2. Its function is as follows. The MEKK1, MKK1/MKK2 and MPK4 function in a signaling pathway that modulates the expression of genes responding to biotic and abiotic stresses and also plays an important role in pathogen defense by negatively regulating innate immunity. Involved in the innate immune MAP kinase signaling cascade (MEKK1, MKK4/MKK5 and MPK3/MPK6) downstream of bacterial flagellin receptor FLS2. May be involved in the cold and salinity stress-mediated MAP kinase signaling cascade (MEKK1, MKK1/MKK2 and MPK4/MPK6). Activates by phosphorylation the downstream MKK2, MKK4 and MKK5 in a calcium-dependent manner. This is Mitogen-activated protein kinase kinase kinase 1 (MEKK1) from Arabidopsis thaliana (Mouse-ear cress).